The sequence spans 425 residues: Polyribonucleotide 5'-hydroxyl-kinase Clp1 (425 aa).

Residues Glu22, Lys62, and 124 to 129 (DVGKST) each bind ATP.

Belongs to the Clp1 family. Clp1 subfamily. Component of the tRNA splicing endonuclease complex. Component of pre-mRNA cleavage complex II (CF-II).

Its subcellular location is the nucleus. It carries out the reaction a 5'-end dephospho-2'-deoxyribonucleoside-DNA + ATP = a 5'-end 5'-phospho-2'-deoxyribonucleoside-DNA + ADP + H(+). It catalyses the reaction a 5'-end dephospho-ribonucleoside-RNA + ATP = a 5'-end 5'-phospho-ribonucleoside-RNA + ADP + H(+). Its function is as follows. Polynucleotide kinase that can phosphorylate the 5'-hydroxyl groups of double-stranded RNA (dsRNA), single-stranded RNA (ssRNA), double stranded DNA (dsDNA) and double-stranded DNA:RNA hybrids. dsRNA is phosphorylated more efficiently than dsDNA, and the RNA component of a DNA:RNA hybrid is phosphorylated more efficiently than the DNA component. Plays a role in both tRNA splicing and mRNA 3'-end formation. Component of the tRNA splicing endonuclease complex: phosphorylates the 5'-terminus of the tRNA 3'-exon during tRNA splicing; this phosphorylation event is a prerequisite for the subsequent ligation of the two exon halves and the production of a mature tRNA. Its role in tRNA splicing and maturation is required for cerebellar development. Component of the pre-mRNA cleavage complex II (CF-II), which seems to be required for mRNA 3'-end formation. Also phosphorylates the 5'-terminus of exogenously introduced short interfering RNAs (siRNAs), which is a necessary prerequisite for their incorporation into the RNA-induced silencing complex (RISC). However, endogenous siRNAs and microRNAs (miRNAs) that are produced by the cleavage of dsRNA precursors by dicer1 already contain a 5'-phosphate group, so this protein may be dispensible for normal RNA-mediated gene silencing. The polypeptide is Polyribonucleotide 5'-hydroxyl-kinase Clp1 (Gallus gallus (Chicken)).